The chain runs to 906 residues: Probable RNA-directed DNA polymerase from transposon BS (906 aa).

The region spanning A482–L758 is the Reverse transcriptase domain.

Mg(2+) is required as a cofactor. Requires Mn(2+) as cofactor.

The enzyme catalyses DNA(n) + a 2'-deoxyribonucleoside 5'-triphosphate = DNA(n+1) + diphosphate. This chain is Probable RNA-directed DNA polymerase from transposon BS, found in Drosophila melanogaster (Fruit fly).